The sequence spans 729 residues: Phosphoribosylformylglycinamidine synthase subunit PurL (729 aa).

Residue His54 is part of the active site. Residues Tyr57 and Lys96 each coordinate ATP. Glu98 serves as a coordination point for Mg(2+). Substrate-binding positions include Ser99 to His102 and Arg121. Residue His100 is the Proton acceptor of the active site. Asp122 is a Mg(2+) binding site. Gln245 contributes to the substrate binding site. Asp273 provides a ligand contact to Mg(2+). Glu317–Gln319 contacts substrate. Residues Asp495 and Gly532 each contribute to the ATP site. Asn533 serves as a coordination point for Mg(2+). Residue Ser535 participates in substrate binding.

This sequence belongs to the FGAMS family. Monomer. Part of the FGAM synthase complex composed of 1 PurL, 1 PurQ and 2 PurS subunits.

It localises to the cytoplasm. The enzyme catalyses N(2)-formyl-N(1)-(5-phospho-beta-D-ribosyl)glycinamide + L-glutamine + ATP + H2O = 2-formamido-N(1)-(5-O-phospho-beta-D-ribosyl)acetamidine + L-glutamate + ADP + phosphate + H(+). It participates in purine metabolism; IMP biosynthesis via de novo pathway; 5-amino-1-(5-phospho-D-ribosyl)imidazole from N(2)-formyl-N(1)-(5-phospho-D-ribosyl)glycinamide: step 1/2. Its function is as follows. Part of the phosphoribosylformylglycinamidine synthase complex involved in the purines biosynthetic pathway. Catalyzes the ATP-dependent conversion of formylglycinamide ribonucleotide (FGAR) and glutamine to yield formylglycinamidine ribonucleotide (FGAM) and glutamate. The FGAM synthase complex is composed of three subunits. PurQ produces an ammonia molecule by converting glutamine to glutamate. PurL transfers the ammonia molecule to FGAR to form FGAM in an ATP-dependent manner. PurS interacts with PurQ and PurL and is thought to assist in the transfer of the ammonia molecule from PurQ to PurL. In Staphylococcus aureus (strain Mu3 / ATCC 700698), this protein is Phosphoribosylformylglycinamidine synthase subunit PurL.